The chain runs to 375 residues: Succinyl-diaminopimelate desuccinylase (375 aa).

His-66 contributes to the Zn(2+) binding site. The active site involves Asp-68. Asp-99 is a binding site for Zn(2+). Glu-133 serves as the catalytic Proton acceptor. Zn(2+) is bound by residues Glu-134, Glu-162, and His-348.

Belongs to the peptidase M20A family. DapE subfamily. As to quaternary structure, homodimer. Requires Zn(2+) as cofactor. Co(2+) serves as cofactor.

The catalysed reaction is N-succinyl-(2S,6S)-2,6-diaminopimelate + H2O = (2S,6S)-2,6-diaminopimelate + succinate. It participates in amino-acid biosynthesis; L-lysine biosynthesis via DAP pathway; LL-2,6-diaminopimelate from (S)-tetrahydrodipicolinate (succinylase route): step 3/3. In terms of biological role, catalyzes the hydrolysis of N-succinyl-L,L-diaminopimelic acid (SDAP), forming succinate and LL-2,6-diaminopimelate (DAP), an intermediate involved in the bacterial biosynthesis of lysine and meso-diaminopimelic acid, an essential component of bacterial cell walls. In Citrobacter koseri (strain ATCC BAA-895 / CDC 4225-83 / SGSC4696), this protein is Succinyl-diaminopimelate desuccinylase.